Consider the following 516-residue polypeptide: Thioredoxin reductase 2, mitochondrial (516 aa).

62–79 (DYVKPTPVGTKWGIGGTC) contacts FAD. C79 and C84 are disulfide-bonded. H489 functions as the Proton acceptor in the catalytic mechanism.

It belongs to the class-I pyridine nucleotide-disulfide oxidoreductase family. Homodimer. FAD is required as a cofactor.

The protein resides in the mitochondrion. The enzyme catalyses [thioredoxin]-dithiol + NADP(+) = [thioredoxin]-disulfide + NADPH + H(+). In terms of biological role, thioredoxin system is a major player in glutathione metabolism, due to the demonstrated absence of a glutathione reductase. Functionally interacts with the Sod/Cat reactive oxidation species (ROS) defense system and thereby has a role in preadult development and life span. Lack of a glutathione reductase suggests antioxidant defense in Drosophila, and probably in related insects, differs fundamentally from that in other organisms. This Drosophila melanogaster (Fruit fly) protein is Thioredoxin reductase 2, mitochondrial.